A 303-amino-acid chain; its full sequence is Aspartate carbamoyltransferase catalytic subunit (303 aa).

Arginine 49 and threonine 50 together coordinate carbamoyl phosphate. Lysine 77 is a binding site for L-aspartate. Residues arginine 99, histidine 126, and glutamine 129 each coordinate carbamoyl phosphate. The L-aspartate site is built by arginine 159 and arginine 211. Carbamoyl phosphate contacts are provided by serine 252 and proline 253.

It belongs to the aspartate/ornithine carbamoyltransferase superfamily. ATCase family. As to quaternary structure, heterododecamer (2C3:3R2) of six catalytic PyrB chains organized as two trimers (C3), and six regulatory PyrI chains organized as three dimers (R2).

The enzyme catalyses carbamoyl phosphate + L-aspartate = N-carbamoyl-L-aspartate + phosphate + H(+). The protein operates within pyrimidine metabolism; UMP biosynthesis via de novo pathway; (S)-dihydroorotate from bicarbonate: step 2/3. In terms of biological role, catalyzes the condensation of carbamoyl phosphate and aspartate to form carbamoyl aspartate and inorganic phosphate, the committed step in the de novo pyrimidine nucleotide biosynthesis pathway. The sequence is that of Aspartate carbamoyltransferase catalytic subunit from Listeria welshimeri serovar 6b (strain ATCC 35897 / DSM 20650 / CCUG 15529 / CIP 8149 / NCTC 11857 / SLCC 5334 / V8).